Consider the following 368-residue polypeptide: Phospho-N-acetylmuramoyl-pentapeptide-transferase (368 aa).

The next 9 helical transmembrane spans lie at 30–50 (AAAI…IRYL), 72–92 (LPTM…LLWS), 98–118 (HVWL…IDDY), 139–159 (VALG…SVLM), 170–190 (LTID…TALS), 208–228 (AIVV…VYAT), 238–258 (GGEI…FLWF), 264–286 (EIFM…ALLI), and 345–365 (KIVI…LMTL).

Belongs to the glycosyltransferase 4 family. MraY subfamily. It depends on Mg(2+) as a cofactor.

The protein localises to the cell inner membrane. It carries out the reaction UDP-N-acetyl-alpha-D-muramoyl-L-alanyl-gamma-D-glutamyl-meso-2,6-diaminopimeloyl-D-alanyl-D-alanine + di-trans,octa-cis-undecaprenyl phosphate = di-trans,octa-cis-undecaprenyl diphospho-N-acetyl-alpha-D-muramoyl-L-alanyl-D-glutamyl-meso-2,6-diaminopimeloyl-D-alanyl-D-alanine + UMP. It participates in cell wall biogenesis; peptidoglycan biosynthesis. Its function is as follows. Catalyzes the initial step of the lipid cycle reactions in the biosynthesis of the cell wall peptidoglycan: transfers peptidoglycan precursor phospho-MurNAc-pentapeptide from UDP-MurNAc-pentapeptide onto the lipid carrier undecaprenyl phosphate, yielding undecaprenyl-pyrophosphoryl-MurNAc-pentapeptide, known as lipid I. The polypeptide is Phospho-N-acetylmuramoyl-pentapeptide-transferase (Chlorobium luteolum (strain DSM 273 / BCRC 81028 / 2530) (Pelodictyon luteolum)).